The following is a 943-amino-acid chain: Sodium- and chloride-dependent GABA transporter ine (943 aa).

The Cytoplasmic portion of the chain corresponds to 1–345; sequence MAENKDVSQV…RQQHWANKMQ (345 aa). The segment at 103 to 122 is disordered; sequence HKQSPLRHTSVRTRPSSEVL. Helical transmembrane passes span 346-366, 373-393, and 418-438; these read FVLACIGYSVGLGNVWRFPYM, GVFLVPYCIILFICSIPLLFM, and GAGLASVVVSFLMSTYYSVII. The Extracellular segment spans residues 439–510; that stretch reads GYSIYYFFTS…GLEYPGMMRW (72 aa). Residue N476 is glycosylated (N-linked (GlcNAc...) asparagine). A run of 9 helical transmembrane segments spans residues 511-531, 539-559, 591-607, 618-638, 679-699, 723-743, 754-774, 799-819, and 836-856; these read ELFACLICAWLMVYFATWKSI, YFTATFPFVLIIILMVRAVTL, FNSLGITFGSMISFASY, TVAVSAVNMITSLLVGIFAFS, WAVMFFFMLLCLGLNSQFAIV, IVVLFVCVISCLFGMPNIIQG, YAASVTIMFLAFCQMIAIAWF, CWLVLGPCLLFAIWVLSLINY, and YGIGWMFASFSLICIPGYAVI. Over 857 to 943 the chain is Cytoplasmic; it reads NFLRSSGDTF…HAEAGGPCGQ (87 aa).

Belongs to the sodium:neurotransmitter symporter (SNF) (TC 2.A.22) family. As to expression, expressed both maternally and zygotically. Developing embryos exhibit expression in the posterior hindgut, foregut, midgut, Malpighian tubules, anal plate, Garland cells, and a subset of cells in the central nervous system. Central nervous system expression is seen in segmentally repeating in cells flanking the midline of the ventral ganglion. Isoform A and isoform B are colocalized in both the nervous system and the fluid reabsorption system.

The protein localises to the membrane. Plays a role in neuronal membrane excitation, important for normal response properties of the photoreceptor. Able to control excitability from either neurons or glia cells. Ine negatively regulates neuronal sodium channels. Controls neurotransmitter-mediated signaling pathways associated with the structure of the larval peripheral nerve, ine and eag control perineurial glial growth through partially redundant pathways. Isoform A and isoform B are both functional, although isoform A functions with greater efficiency. Has a role in osmolyte transport within the Malpighian tubule and hindgut. The sequence is that of Sodium- and chloride-dependent GABA transporter ine from Drosophila melanogaster (Fruit fly).